Here is a 48-residue protein sequence, read N- to C-terminus: Large ribosomal subunit protein eL40 (48 aa).

It belongs to the eukaryotic ribosomal protein eL40 family.

This Methanosphaera stadtmanae (strain ATCC 43021 / DSM 3091 / JCM 11832 / MCB-3) protein is Large ribosomal subunit protein eL40.